The following is a 232-amino-acid chain: Large ribosomal subunit protein uL1 (232 aa).

It belongs to the universal ribosomal protein uL1 family. As to quaternary structure, part of the 50S ribosomal subunit.

In terms of biological role, binds directly to 23S rRNA. The L1 stalk is quite mobile in the ribosome, and is involved in E site tRNA release. Its function is as follows. Protein L1 is also a translational repressor protein, it controls the translation of the L11 operon by binding to its mRNA. The sequence is that of Large ribosomal subunit protein uL1 from Bartonella henselae (strain ATCC 49882 / DSM 28221 / CCUG 30454 / Houston 1) (Rochalimaea henselae).